A 229-amino-acid polypeptide reads, in one-letter code: Large ribosomal subunit protein uL1 (229 aa).

This sequence belongs to the universal ribosomal protein uL1 family. In terms of assembly, part of the 50S ribosomal subunit.

Its function is as follows. Binds directly to 23S rRNA. The L1 stalk is quite mobile in the ribosome, and is involved in E site tRNA release. Protein L1 is also a translational repressor protein, it controls the translation of the L11 operon by binding to its mRNA. The sequence is that of Large ribosomal subunit protein uL1 from Streptococcus suis (strain 98HAH33).